Consider the following 497-residue polypeptide: Serine hydroxymethyltransferase (497 aa).

(6S)-5,6,7,8-tetrahydrofolate is bound by residues Leu-176 and 180 to 182 (GHL). Position 289 is an N6-(pyridoxal phosphate)lysine (Lys-289).

Belongs to the SHMT family. In terms of assembly, homodimer. The cofactor is pyridoxal 5'-phosphate.

The protein resides in the cytoplasm. The enzyme catalyses (6R)-5,10-methylene-5,6,7,8-tetrahydrofolate + glycine + H2O = (6S)-5,6,7,8-tetrahydrofolate + L-serine. Its pathway is one-carbon metabolism; tetrahydrofolate interconversion. It participates in amino-acid biosynthesis; glycine biosynthesis; glycine from L-serine: step 1/1. In terms of biological role, catalyzes the reversible interconversion of serine and glycine with tetrahydrofolate (THF) serving as the one-carbon carrier. This reaction serves as the major source of one-carbon groups required for the biosynthesis of purines, thymidylate, methionine, and other important biomolecules. Also exhibits THF-independent aldolase activity toward beta-hydroxyamino acids, producing glycine and aldehydes, via a retro-aldol mechanism. The sequence is that of Serine hydroxymethyltransferase from Chlamydia abortus (strain DSM 27085 / S26/3) (Chlamydophila abortus).